The following is a 2410-amino-acid chain: Dual specificity protein kinase splA (2410 aa).

Disordered stretches follow at residues 29–48 (NNNN…NNNN), 66–103 (NHPS…GELT), 116–158 (NTQT…SNGG), 187–252 (NISP…SSGI), 508–647 (QQLQ…VPSA), and 659–820 (SSSS…KKEG). 2 stretches are compositionally biased toward low complexity: residues 116–128 (NTQT…TSPN) and 137–158 (NTTT…SNGG). The segment covering 514–525 (QPPPTIQPPPQQ) has biased composition (pro residues). Residues 530 to 544 (LRGNRSSGNLSGLNS) show a composition bias toward low complexity. A compositionally biased stretch (polar residues) spans 545–554 (FSLKQSTDSL). Over residues 560-583 (SQQSTVSSNSTPIAATPISPLTAP) the composition is skewed to low complexity. Residues 584–594 (TSPPPPPPPPT) are compositionally biased toward pro residues. Composition is skewed to low complexity over residues 595–618 (NFNS…NTTV), 627–639 (VLPK…SPRP), 659–686 (SSSS…LNIS), 701–738 (SPSY…SPSV), 746–759 (ISPN…PNIS), and 777–813 (NTNN…NNTN). B30.2/SPRY domains lie at 822 to 1004 (SSWF…GPFS) and 1020 to 1209 (DSGG…PPFK). Disordered stretches follow at residues 1228–1428 (PNGN…NNIY) and 1493–1512 (SLGV…PRKI). 4 stretches are compositionally biased toward low complexity: residues 1229-1359 (NGNN…NNNI), 1373-1399 (SSTG…NNSS), 1419-1428 (SSTNNNNNIY), and 1493-1507 (SLGV…SPKT). The region spanning 1481–1703 (PITASTNHTL…CVATFPGGHF (223 aa)) is the B30.2/SPRY 3 domain. In terms of domain architecture, SAM spans 1734 to 1798 (WAPNDVAIWL…INRLNRMIQI (65 aa)). The disordered stretch occupies residues 1862 to 2105 (KSYTQKEIED…PPPPPQLPVR (244 aa)). Basic and acidic residues predominate over residues 1865–1874 (TQKEIEDRNR). Low complexity predominate over residues 1951 to 1967 (SVSSTGGSSGFLTFPSS). A compositionally biased stretch (polar residues) spans 1989–2002 (ITSNYKGITNTGQP). Over residues 2020–2070 (SNNGNNGNNNNNNNNNNIKANQQQQQQSSYQQSQTQQQQQHITSTSTSTTN) the composition is skewed to low complexity. Over residues 2089–2102 (PSRPPPPPPPPPQL) the composition is skewed to pro residues. The Protein kinase domain occupies 2115-2387 (LEFGQTIGKG…FKQIIVHLKE (273 aa)). Residues 2121-2129 (IGKGFFGEV) and K2142 each bind ATP. The active-site Proton acceptor is D2243.

It belongs to the protein kinase superfamily. TKL Tyr protein kinase family. Post-translationally, tyrosine kinase domain is capable of autophosphorylation, in vitro; however it is also autophosphorylated on serine and threonine residues.

It catalyses the reaction L-tyrosyl-[protein] + ATP = O-phospho-L-tyrosyl-[protein] + ADP + H(+). Its function is as follows. Essential for spore differentiation. The protein is Dual specificity protein kinase splA (splA) of Dictyostelium discoideum (Social amoeba).